A 383-amino-acid chain; its full sequence is Neuropeptide Y receptor type 1 (383 aa).

Residues 1–34 are Extracellular-facing; that stretch reads MNSTSFSQLENHSVHYNLSEEKPSFFAFENDDCH. Residues Asn-2, Asn-11, and Asn-17 are each glycosylated (N-linked (GlcNAc...) asparagine). The helical transmembrane segment at 35–55 threads the bilayer; the sequence is LPLAVIFTLALAYGAVIILGV. Residues 56–87 lie on the Cytoplasmic side of the membrane; sequence SGNLALILIILKQKEMRNVTNILIVNLSFSDL. The helical transmembrane segment at 88 to 108 threads the bilayer; it reads LVAIMCLPFTFVYTLMDHWIF. Residues 109–116 are Extracellular-facing; the sequence is GEIMCKLN. Residues Cys-113 and Cys-198 are joined by a disulfide bond. A helical membrane pass occupies residues 117-137; that stretch reads PFVQCVSITVSIFSLVLIAVE. Over 138–154 the chain is Cytoplasmic; it reads RHQLIINPRGWRPNNRH. The helical transmembrane segment at 155–175 threads the bilayer; sequence AYIGIAVIWVLAVASSLPFMI. Residues 176–211 are Extracellular-facing; the sequence is YQVLTDEPFQNVTLDAFKDKLVCFDQFPSDSHRLSY. The chain crosses the membrane as a helical span at residues 212 to 232; the sequence is TTLLLVLQYFGPLCFIFICYF. The Cytoplasmic portion of the chain corresponds to 233–260; the sequence is KIYIRLKRRNNMMDKMRDSKYRSSESKR. A helical transmembrane segment spans residues 261 to 281; it reads INIMLLSIVVAFAVCWLPLTI. At 282 to 299 the chain is on the extracellular side; that stretch reads FNTVFDWNHQIIATCNHN. Residues 300 to 320 traverse the membrane as a helical segment; sequence LLFLLCHLTAMISTCVNPIFY. The Cytoplasmic segment spans residues 321–383; sequence GFLNKNFQRD…KISCVENEKI (63 aa). A lipid anchor (S-palmitoyl cysteine) is attached at Cys-338. Residues Ser-368 and Ser-376 each carry the phosphoserine modification.

This sequence belongs to the G-protein coupled receptor 1 family.

The protein localises to the cell membrane. Its function is as follows. Receptor for neuropeptide Y and peptide YY. The protein is Neuropeptide Y receptor type 1 (NPY1R) of Cavia porcellus (Guinea pig).